The sequence spans 247 residues: Complement C1q subcomponent subunit A (247 aa).

The signal sequence occupies residues M1–A24. The interval D26–R116 is disordered. The span at T27–A38 shows a compositional bias: basic and acidic residues. The region spanning G33 to I111 is the Collagen-like domain. P41 and P47 each carry 4-hydroxyproline. K50 carries the post-translational modification 5-hydroxylysine. K50 carries O-linked (Gal...) hydroxylysine glycosylation. Residues P56 and P59 each carry the 4-hydroxyproline modification. K69 is subject to 5-hydroxylysine. O-linked (Gal...) hydroxylysine glycosylation is present at K69. Residues P81 and P87 each carry the 4-hydroxyproline modification. Positions L98–G109 are enriched in low complexity. K102 carries the post-translational modification 5-hydroxylysine. An O-linked (Gal...) hydroxylysine glycan is attached at K102. In terms of domain architecture, C1q spans K112–T247. C174 and C192 form a disulfide bridge. Q201 contacts Ca(2+).

Core component of the complement C1 complex, a calcium-dependent complex composed of 1 molecule of the C1Q subcomplex, 2 molecules of C1R and 2 molecules of C1S. The C1Q subcomplex is composed 18 subunits: 3 chains of C1QA, C1QB, and C1QC trimerize to form 6 collagen-like triple helices connected to six globular ligand-recognition modules (C1q domain). Interacts with CR1 (via Sushi 24 and Sushi 25 domains). Interacts (via C-terminus) with CD33; this interaction activates CD33 inhibitory motifs. Post-translationally, O-linked glycans are assumed to be the Glc-Gal disaccharides typically found as secondary modifications of hydroxylated lysines in collagen-like domains.

The protein localises to the secreted. It is found in the cell surface. With respect to regulation, the C1Q subcomplex is inhibited by sulfated molecules, such as triterpenoid sulfates, heparan sulfate, or chondroitin sulfates. Core component of the complement C1 complex, a multiprotein complex that initiates the classical pathway of the complement system, a cascade of proteins that leads to phagocytosis and breakdown of pathogens and signaling that strengthens the adaptive immune system. The classical complement pathway is initiated by the C1Q subcomplex of the C1 complex, which specifically binds IgG or IgM immunoglobulins complexed with antigens, forming antigen-antibody complexes on the surface of pathogens: C1QA, together with C1QB and C1QC, specifically recognizes and binds the Fc regions of IgG or IgM via its C1q domain. Immunoglobulin-binding activates the proenzyme C1R, which cleaves C1S, initiating the proteolytic cascade of the complement system. The C1Q subcomplex is activated by a hexamer of IgG complexed with antigens, while it is activated by a pentameric IgM. The C1Q subcomplex also recognizes and binds phosphatidylserine exposed on the surface of cells undergoing programmed cell death, possibly promoting activation of the complement system. This is Complement C1q subcomponent subunit A (C1QA) from Sus scrofa (Pig).